The sequence spans 444 residues: NADH-dependent flavin oxidoreductase nadA (444 aa).

Residues 37-40 and Gln123 each bind FMN; that span reads ERMC. Residues 127-149 are disordered; the sequence is PGRQTPSHRQPEPISASDVPLDT. Residue 192 to 195 participates in substrate binding; sequence HAAH. Position 345–346 (345–346) interacts with FMN; that stretch reads AR.

The protein belongs to the NADH:flavin oxidoreductase/NADH oxidase family.

It localises to the cytoplasm. The protein localises to the cytosol. NADH-dependent flavin oxidoreductase; part of the gene cluster that mediates the biosynthesis of aflatoxins, a group of polyketide-derived furanocoumarins, and part of the most toxic and carcinogenic compounds among the known mycotoxins. The four major aflatoxins produced by A.parasiticus are aflatoxin B1 (AFB1), aflatoxin B2 (AFB2), aflatoxin G1 (AFG1) and aflatoxin G2 (AFG2). Within the aflatoxin pathway, the NADH-dependent flavin oxidoreductase nadA is specifically required for the last steps in which OMST is converted specifically to aflatoxin G1. The biosynthesis of aflatoxins begins with the norsolorinic acid synthase aflC that combines a hexanoyl starter unit produced by the fatty acid synthase aflA/aflB and 7 malonyl-CoA extender units to synthesize the precursor NOR. The second step is the conversion of NOR to averantin and requires the norsolorinic acid ketoreductase aflD, which catalyzes the dehydration of norsolorinic acid to form (1'S)-averantin. The norsolorinic acid reductases aflE and aflF may also play a role in the conversion of NOR to AVN. The cytochrome P450 monooxygenase aflG then catalyzes the hydroxylation of AVN to 5'hydroxyaverantin (HAVN). The next step is performed by the 5'-hydroxyaverantin dehydrogenase aflH that transforms HAVN to 5'-oxoaverantin (OAVN) which is further converted to averufin (AVF) by aflK that plays a dual role in the pathway, as a 5'-oxoaverantin cyclase that mediates conversion of 5'-oxoaverantin, as well as a versicolorin B synthase in a later step in the pathway. The averufin oxidase aflI catalyzes the conversion of AVF to versiconal hemiacetal acetate (VHA). VHA is then the substrate for the versiconal hemiacetal acetate esterase aflJ to yield versiconal (VAL). Versicolorin B synthase aflK then converts VAL to versicolorin B (VERB) by closing the bisfuran ring of aflatoxin which is required for DNA-binding, thus giving to aflatoxin its activity as a mutagen. Then, the activity of the versicolorin B desaturase aflL leads to versicolorin A (VERA). A branch point starts from VERB since it can also be converted to dihydrodemethylsterigmatocystin (DMDHST), probably also by aflL, VERA being a precursor for aflatoxins B1 and G1, and DMDHST for aflatoxins B2 and G2. Next, the versicolorin reductase aflM and the cytochrome P450 monooxygenase aflN are involved in conversion of VERA to demethylsterigmatocystin (DMST). AflX and aflY seem also involved in this step, through probable aflX-mediated epoxide ring-opening step following versicolorin A oxidation and aflY-mediated Baeyer-Villiger oxidation required for the formation of the xanthone ring. The methyltransferase aflO then leads to the modification of DMST to sterigmatocystin (ST), and of DMDHST to dihydrosterigmatocystin (DHST). Both ST and DHST are then substrates of the O-methyltransferase aflP to yield O-methylsterigmatocystin (OMST) and dihydro-O-methylsterigmatocystin (DHOMST), respectively. Finally OMST is converted to aflatoxins B1 and G1, and DHOMST to aflatoxins B2 and G2, via the action of several enzymes including O-methylsterigmatocystin oxidoreductase aflQ, the cytochrome P450 monooxygenase aflU, but also the NADH-dependent flavin oxidoreductase nadA which is specifically required for the synthesis of AFG1. This is NADH-dependent flavin oxidoreductase nadA from Aspergillus parasiticus (strain ATCC 56775 / NRRL 5862 / SRRC 143 / SU-1).